Reading from the N-terminus, the 416-residue chain is Exodeoxyribonuclease 7 large subunit (416 aa).

Residues 1–21 (MTEPDSKPKKGRAGRKKAEPV) are disordered.

It belongs to the XseA family. As to quaternary structure, heterooligomer composed of large and small subunits.

Its subcellular location is the cytoplasm. The catalysed reaction is Exonucleolytic cleavage in either 5'- to 3'- or 3'- to 5'-direction to yield nucleoside 5'-phosphates.. Bidirectionally degrades single-stranded DNA into large acid-insoluble oligonucleotides, which are then degraded further into small acid-soluble oligonucleotides. The polypeptide is Exodeoxyribonuclease 7 large subunit (Deinococcus radiodurans (strain ATCC 13939 / DSM 20539 / JCM 16871 / CCUG 27074 / LMG 4051 / NBRC 15346 / NCIMB 9279 / VKM B-1422 / R1)).